The primary structure comprises 98 residues: Carboxysome shell protein CsoS1C (98 aa).

The BMC domain maps to 8–93 (ALGMIETRGL…VHSEVENILP (86 aa)).

Belongs to the bacterial microcompartments protein family. CsoS1 subfamily. In terms of assembly, homohexamer with a small central pore. Interacts with the N-terminus (residues 1-136) of RuBisCO (CbbL).

The protein resides in the carboxysome. Functionally, one of shell proteins of the carboxysome, a polyhedral inclusion where RuBisCO (ribulose bisphosphate carboxylase, ccbL-ccbS) is sequestered. Assembles into hexamers which make sheets that form the facets of the polyhedral carboxysome. The shell probably limits the diffusion of CO(2) into and out of the carboxysome. There are estimated to be 2970 CsoS1A/CsoS1C proteins per carboxysome (the proteins differ by only 1 residue). Unlike beta-carboxysomes, alpha-carboxysomes (Cb) can form without cargo protein. CsoS2 is essential for Cb formation and is also capable of targeting foreign proteins to the Cb. The Cb shell assembles with the aid of CsoS2; CsoS1A, CsoS1B and CsoS1C form the majority of the shell while CsoS4A and CsoS4B form vertices. CsoS1D forms pseudohexamers that probably control metabolite flux into and out of the shell. This is Carboxysome shell protein CsoS1C from Halothiobacillus neapolitanus (strain ATCC 23641 / c2) (Thiobacillus neapolitanus).